Consider the following 878-residue polypeptide: Probable outer membrane protein PmpI (878 aa).

Residues 1–24 (MRPDHMNFCCLCAAILSSTAVLFG) form the signal peptide. Over residues 360–371 (SSKESPLPSSLQ) the composition is skewed to low complexity. The disordered stretch occupies residues 360-381 (SSKESPLPSSLQASVTSPTPAT). Positions 372 to 381 (ASVTSPTPAT) are enriched in polar residues. Residues 602–878 (GGAYLFGTWG…SLDLGTTYRF (277 aa)) form the Autotransporter domain.

It belongs to the PMP outer membrane protein family.

It localises to the secreted. Its subcellular location is the cell wall. The protein resides in the cell outer membrane. This is Probable outer membrane protein PmpI (pmpI) from Chlamydia trachomatis serovar D (strain ATCC VR-885 / DSM 19411 / UW-3/Cx).